A 252-amino-acid chain; its full sequence is 3-dehydroquinate dehydratase (252 aa).

Residues Ser-21, 46-48 (EWR), and Arg-82 each bind 3-dehydroquinate. The active-site Proton donor/acceptor is His-143. Lys-170 (schiff-base intermediate with substrate) is an active-site residue. Positions 213, 232, and 236 each coordinate 3-dehydroquinate.

Belongs to the type-I 3-dehydroquinase family. In terms of assembly, homodimer.

It catalyses the reaction 3-dehydroquinate = 3-dehydroshikimate + H2O. It functions in the pathway metabolic intermediate biosynthesis; chorismate biosynthesis; chorismate from D-erythrose 4-phosphate and phosphoenolpyruvate: step 3/7. Functionally, involved in the third step of the chorismate pathway, which leads to the biosynthesis of aromatic amino acids. Catalyzes the cis-dehydration of 3-dehydroquinate (DHQ) and introduces the first double bond of the aromatic ring to yield 3-dehydroshikimate. The polypeptide is 3-dehydroquinate dehydratase (Shigella flexneri serotype 5b (strain 8401)).